A 101-amino-acid polypeptide reads, in one-letter code: Omega-scoloptoxin(10)-Ssd1b (101 aa).

The signal sequence occupies residues 1 to 23; it reads MNKLTIIFFTILLLTYIIVEKEA.

Post-translationally, contains 3 disulfide bonds. As to expression, expressed by the venom gland.

The protein resides in the secreted. Functionally, voltage-gated calcium channel inhibitor. In Scolopendra dehaani (Thai centipede), this protein is Omega-scoloptoxin(10)-Ssd1b.